The sequence spans 913 residues: Glutamate receptor ionotropic, kainate 2 (913 aa).

At 1-566 (MCAGTMKIIS…VFSFLNPLSP (566 aa)) the chain is on the extracellular side. N-linked (GlcNAc...) asparagine glycosylation is found at asparagine 72, asparagine 78, asparagine 280, asparagine 383, asparagine 417, asparagine 428, and asparagine 435. Cysteines 101 and 352 form a disulfide. Residues proline 521, alanine 523, and arginine 528 each coordinate L-glutamate. Asparagine 551 carries N-linked (GlcNAc...) asparagine glycosylation. The helical transmembrane segment at 567-587 (DIWMYILLAYLGVSCVLFVIA) threads the bilayer. Residues 588–643 (RFSPYEWYNPHPCNPDSDVVENNFTLLNSFWFGVGALMQQGSELMPKALSTRIVGG) lie on the Cytoplasmic side of the membrane. A helical membrane pass occupies residues 644-664 (IWWFFTLIIISSYTANLAAFL). Topologically, residues 665–824 (TVERMESPID…KEASALGVQN (160 aa)) are extracellular. 3 residues coordinate L-glutamate: alanine 694, threonine 695, and glutamate 743. A disulfide bond links cysteine 755 and cysteine 809. A glycan (N-linked (GlcNAc...) asparagine) is linked at asparagine 756. The chain crosses the membrane as a helical span at residues 825-845 (IGGIFIVLAAGLVLSVFVAVG). Over 846 to 913 (EFLYKSKKNA…RRLPGKETMA (68 aa)) the chain is Cytoplasmic.

The protein belongs to the glutamate-gated ion channel (TC 1.A.10.1) family. GRIK2 subfamily. As to quaternary structure, homotetramer and heterotetramer with GRIK5. Tetramers may be formed by the dimerization of dimers.

The protein localises to the cell membrane. The protein resides in the postsynaptic cell membrane. The catalysed reaction is Ca(2+)(in) = Ca(2+)(out). It carries out the reaction Na(+)(in) = Na(+)(out). Its activity is regulated as follows. Cold receptor activity activated by temperatures between 10-19 degrees Celsius. Functionally, ionotropic glutamate receptor that functions as a cation-permeable ligand-gated ion channel, gated by L-glutamate and the glutamatergic agonist kainic acid. L-glutamate acts as an excitatory neurotransmitter at many synapses in the central nervous system. Binding of the excitatory neurotransmitter L-glutamate induces a conformation change, leading to the opening of the cation channel, and thereby converts the chemical signal to an electrical impulse. The receptor then desensitizes rapidly and enters a transient inactive state, characterized by the presence of bound agonist. Independent of its ionotropic glutamate receptor activity, acts as a thermoreceptor conferring sensitivity to cold temperatures. Functions in dorsal root ganglion neurons. This chain is Glutamate receptor ionotropic, kainate 2 (grik2), found in Xenopus laevis (African clawed frog).